Consider the following 283-residue polypeptide: Polyamine aminopropyltransferase (283 aa).

The region spanning 2 to 238 (ELWYTEEWTE…GHWLFGFASK (237 aa)) is the PABS domain. Q31 serves as a coordination point for S-methyl-5'-thioadenosine. The spermidine site is built by H62 and D86. S-methyl-5'-thioadenosine-binding positions include E106 and 137-138 (DG). The active-site Proton acceptor is D156. 156–159 (DSTD) contacts spermidine. Position 163 (P163) interacts with S-methyl-5'-thioadenosine.

It belongs to the spermidine/spermine synthase family. In terms of assembly, homodimer or homotetramer.

It localises to the cytoplasm. The catalysed reaction is S-adenosyl 3-(methylsulfanyl)propylamine + putrescine = S-methyl-5'-thioadenosine + spermidine + H(+). It functions in the pathway amine and polyamine biosynthesis; spermidine biosynthesis; spermidine from putrescine: step 1/1. Its function is as follows. Catalyzes the irreversible transfer of a propylamine group from the amino donor S-adenosylmethioninamine (decarboxy-AdoMet) to putrescine (1,4-diaminobutane) to yield spermidine. In Clostridioides difficile (strain 630) (Peptoclostridium difficile), this protein is Polyamine aminopropyltransferase.